A 349-amino-acid chain; its full sequence is Probable arabinogalactan endo-beta-1,4-galactanase A (349 aa).

The N-terminal stretch at 1–15 (MLLSFLPLLPLATAA) is a signal peptide. N-linked (GlcNAc...) asparagine glycosylation occurs at Asn-126. The active-site Proton donor is the Glu-150. Glu-261 serves as the catalytic Nucleophile.

It belongs to the glycosyl hydrolase 53 family.

The protein localises to the secreted. The enzyme catalyses The enzyme specifically hydrolyzes (1-&gt;4)-beta-D-galactosidic linkages in type I arabinogalactans.. Functionally, endogalactanase involved in the degradation of plant cell wall polysaccharides, and more particularly of hairy regions of pectin. This is Probable arabinogalactan endo-beta-1,4-galactanase A (galA) from Aspergillus terreus (strain NIH 2624 / FGSC A1156).